Reading from the N-terminus, the 222-residue chain is MNMSRVEQQVIRYPAAKATPVGYLPDPASFNKFRVPASSKKSEQSNVKSILKRKKTDGFTNGVRDQSKIRPKLTETVKRKLSLGARILQVGGLEKIFKRLFRVSEGEKLFKMYQCYLSTTAGPIAGLLFISSKKMAFCSERSIKVDSPQGDIIRVHYKVSIPLCKIDRVNQSQNTKKPSQKYLEVVTVDGFDFWFMGFLSYQKAFNCLEKALSLSFEDNKEQ.

The 79-residue stretch at 95 to 173 (KIFKRLFRVS…CKIDRVNQSQ (79 aa)) folds into the GRAM domain.

The protein belongs to the GEM family.

This is GEM-like protein 4 from Arabidopsis thaliana (Mouse-ear cress).